A 419-amino-acid chain; its full sequence is Sphingomyelin phosphodiesterase 2 (419 aa).

Glutamate 49 is a binding site for Mg(2+). Residue histidine 272 is the Proton acceptor of the active site. Helical transmembrane passes span 326–346 (FSGYVIVWGLSLLVLLCVLAA) and 354–374 (AIILCIPSVGLVLVAGAVYLF).

Belongs to the neutral sphingomyelinase family. Requires Mg(2+) as cofactor. As to expression, although widely expressed in all tissues examined, except the spleen, high enzymatic activity occurs only in the brain.

It is found in the cell membrane. The catalysed reaction is a sphingomyelin + H2O = phosphocholine + an N-acylsphing-4-enine + H(+). It carries out the reaction an N-(acyl)-sphingosylphosphocholine + H2O = an N-acyl-sphingoid base + phosphocholine + H(+). The enzyme catalyses 1-O-octadecyl-sn-glycero-3-phosphocholine + H2O = 1-O-octadecyl-sn-glycerol + phosphocholine + H(+). It catalyses the reaction 1-hexadecanoyl-sn-glycero-3-phosphocholine + H2O = 1-hexadecanoyl-sn-glycerol + phosphocholine + H(+). The catalysed reaction is a sphingosylphosphocholine + H2O = a sphingoid base + phosphocholine + H(+). It carries out the reaction 1-O-hexadecyl-sn-glycero-3-phosphocholine + H2O = 1-O-hexadecyl-sn-glycerol + phosphocholine + H(+). It functions in the pathway lipid metabolism; sphingolipid metabolism. Activated by arachidonic acid. Functionally, catalyzes, at least in vitro, the hydrolysis of sphingomyelin to form ceramide and phosphocholine. Also hydrolyzes 1-O-alkyl-2-lyso-sn-glycero-3-phosphocholine (lyso-platelet-activating factor) in vivo. Also acts on 1-acyl-2-lyso-sn-glycero-3-phosphocholine (lyso-PC) and sphingosylphosphocholine. The chain is Sphingomyelin phosphodiesterase 2 from Mus musculus (Mouse).